The sequence spans 229 residues: Heptaprenylglyceryl phosphate synthase (229 aa).

Sn-glycerol 1-phosphate is bound at residue lysine 12. Aspartate 14 and serine 40 together coordinate Mg(2+). Sn-glycerol 1-phosphate is bound by residues 159-164 (YLEYSG), glycine 189, and 209-210 (GN).

Belongs to the GGGP/HepGP synthase family. Group I subfamily. In terms of assembly, homodimer. Mg(2+) serves as cofactor.

The catalysed reaction is sn-glycerol 1-phosphate + all-trans-heptaprenyl diphosphate = 3-heptaprenyl-sn-glycero-1-phosphate + diphosphate. Its pathway is membrane lipid metabolism; glycerophospholipid metabolism. In terms of biological role, prenyltransferase that catalyzes in vivo the transfer of the heptaprenyl moiety of heptaprenyl pyrophosphate (HepPP; 35 carbon atoms) to the C3 hydroxyl of sn-glycerol-1-phosphate (G1P), producing heptaprenylglyceryl phosphate (HepGP). This reaction is an ether-bond-formation step in the biosynthesis of archaea-type G1P-based membrane lipids found in Bacillales. The polypeptide is Heptaprenylglyceryl phosphate synthase (Bacillus cereus (strain ATCC 10987 / NRS 248)).